The sequence spans 196 residues: Secreted phosphoprotein 24 (196 aa).

The N-terminal stretch at 1–19 (MKWCGVLMVALLQSLCCSG) is a signal peptide. Cystine bridges form between C83-C94 and C107-C125. Residues 125-196 (CGQDSSSSES…RGDSFGNHLE (72 aa)) are disordered. Low complexity predominate over residues 129-138 (SSSSESSSEE).

Belongs to the SPP2 family. Post-translationally, multiply phosphorylated at serine residues.

It is found in the secreted. Functionally, could coordinate an aspect of bone turnover. The sequence is that of Secreted phosphoprotein 24 (spp2) from Salmo salar (Atlantic salmon).